Here is a 141-residue protein sequence, read N- to C-terminus: Cholinesterase (141 aa).

N-linked (GlcNAc...) asparagine glycosylation occurs at Asn-39. 49–50 (GG) contributes to the substrate binding site. Ser-131 (acyl-ester intermediate) is an active-site residue. Ser-131 carries the phosphoserine modification.

It belongs to the type-B carboxylesterase/lipase family. Homotetramer; disulfide-linked. Dimer of dimers. In terms of tissue distribution, present in most cells except erythrocytes.

Its subcellular location is the secreted. The catalysed reaction is an acylcholine + H2O = a carboxylate + choline + H(+). Esterase with broad substrate specificity. Contributes to the inactivation of the neurotransmitter acetylcholine. Can degrade neurotoxic organophosphate esters. The chain is Cholinesterase (BCHE) from Sus scrofa (Pig).